A 237-amino-acid chain; its full sequence is Class B acid phosphatase (237 aa).

An N-terminal signal peptide occupies residues 1-23; that stretch reads MKKITLALSAVCLLFTLNHSANA. The Nucleophile role is filled by Asp69. Residues Asp69 and Asp71 each coordinate Mg(2+). Asp71 (proton donor) is an active-site residue. Residues 137 to 138 and Lys177 each bind substrate; that span reads TG. Residue Asp192 coordinates Mg(2+).

It belongs to the class B bacterial acid phosphatase family. Homotetramer. The cofactor is Mg(2+).

It localises to the periplasm. It catalyses the reaction a phosphate monoester + H2O = an alcohol + phosphate. Dephosphorylates several organic phosphate monoesters. Also has a phosphotransferase activity catalyzing the transfer of low-energy phosphate groups from organic phosphate monoesters to free hydroxyl groups of various organic compounds. The polypeptide is Class B acid phosphatase (Salmonella arizonae (strain ATCC BAA-731 / CDC346-86 / RSK2980)).